The following is a 367-amino-acid chain: Alanine racemase (367 aa).

Lys40 functions as the Proton acceptor; specific for D-alanine in the catalytic mechanism. Lys40 carries the N6-(pyridoxal phosphate)lysine modification. Substrate is bound at residue Arg136. Tyr263 functions as the Proton acceptor; specific for L-alanine in the catalytic mechanism. Met310 contacts substrate.

Belongs to the alanine racemase family. The cofactor is pyridoxal 5'-phosphate.

The catalysed reaction is L-alanine = D-alanine. It functions in the pathway amino-acid biosynthesis; D-alanine biosynthesis; D-alanine from L-alanine: step 1/1. Functionally, catalyzes the interconversion of L-alanine and D-alanine. May also act on other amino acids. The protein is Alanine racemase (alr) of Streptococcus suis (strain 98HAH33).